The chain runs to 897 residues: Interleukin enhancer-binding factor 3 (897 aa).

The region spanning 5–378 is the DZF domain; the sequence is RIFVNDDRHV…PMKRPMEEDG (374 aa). Residues 52–85 are disordered; it reads QEKGNSELSEAENMDTPPDDESKEGAGEQKAEHM. Over residues 60–73 the composition is skewed to acidic residues; the sequence is SEAENMDTPPDDES. Position 67 is a phosphothreonine (Thr-67). Over residues 74-85 the composition is skewed to basic and acidic residues; it reads KEGAGEQKAEHM. Lys-100 carries the N6-acetyllysine modification. Thr-188 carries the phosphothreonine; by PKR modification. Ser-190 is modified (phosphoserine). A Glycyl lysine isopeptide (Lys-Gly) (interchain with G-Cter in ubiquitin) cross-link involves residue Lys-297. Thr-315 carries the post-translational modification Phosphothreonine; by PKR. Lys-348 participates in a covalent cross-link: Glycyl lysine isopeptide (Lys-Gly) (interchain with G-Cter in SUMO1). The disordered stretch occupies residues 363 to 401; that stretch reads TTYAITPMKRPMEEDGEEKSPSKKKKKIQKKEEKAEPPQ. Residues 371-389 carry the Bipartite nuclear localization signal motif; sequence KRPMEEDGEEKSPSKKKKK. Over residues 372–383 the composition is skewed to basic and acidic residues; the sequence is RPMEEDGEEKSP. Residues Ser-382 and Ser-384 each carry the phosphoserine modification. Lys-396 participates in a covalent cross-link: Glycyl lysine isopeptide (Lys-Gly) (interchain with G-Cter in SUMO2). The DRBM 1 domain maps to 398-467; that stretch reads EPPQAMNALM…AVKVLQDMGL (70 aa). The residue at position 460 (Lys-460) is an N6-acetyllysine. Disordered stretches follow at residues 466-524, 624-662, and 720-897; these read GLPT…LTKH, GMGG…GTNH, and GDSY…YQYR. Basic and acidic residues predominate over residues 472–481; the sequence is EGRDSSKGED. Phosphoserine occurs at positions 476, 477, 482, and 486. Residue Lys-489 forms a Glycyl lysine isopeptide (Lys-Gly) (interchain with G-Cter in SUMO2) linkage. Positions 499–508 are enriched in low complexity; sequence VEAVSNPSSV. Residues 524-590 enclose the DRBM 2 domain; that stretch reads HGKNPVMELN…ALAALEKLFP (67 aa). Residues 609 to 897 form an interaction with PRMT1 region; it reads RGGPKFAAKP…TEHSMNYQYR (289 aa). The segment covering 644–662 has biased composition (gly residues); it reads RGGNIRGRGRGRGFGGTNH. Composition is skewed to low complexity over residues 745-769, 783-794, and 802-812; these read SYSS…SSYG, GSYSSYSNSYNS, and DYSYDSKFNYS. Phosphoserine occurs at positions 794, 812, 814, and 818. Positions 813-822 are enriched in gly residues; it reads GSGGRSGGNS. Residues 823 to 833 show a composition bias toward low complexity; sequence YGSSGSSYNTG. A compositionally biased stretch (gly residues) spans 834–844; sequence SHGGYGAGSGG. Positions 845 to 885 are enriched in low complexity; it reads SSSYQGKQGGYSSQSNYSSPGSSQSYSGPASSYQSSQGGYS.

As to quaternary structure, identified in a IGF2BP1-dependent mRNP granule complex containing untranslated mRNAs. Interacts with FUS and SMN. Interacts (via C-terminus) with PRMT1. Forms a complex with ILF2. Can also bind to PRKDC/XRCC7: this may stabilize the interaction of PRKDC/XRCC7 and the heterodimeric complex of XRCC6/KU70 and XRCC5/KU80. Forms a heteromeric complex with ZNF346 and ILF3. Found in a nuclear export complex with XPO5, ILF3, Ran and double-stranded RNA or double-stranded minihelix VA1 RNA. Found in a nuclear export complex with XPO5, RAN, ILF3, ZNF346 and double-stranded RNA. Interacts with XPO5 and ZNF346. Forms a complex with ILF2, YLPM1, KHDRBS1, RBMX, NCOA5 and PPP1CA. Interacts with AGO1 and AGO2. Interacts with DHX36; this interaction occurs in a RNA-dependent manner. Interacts with ELAVL1; this interaction occurs in a RNA-dependent manner. Interacts with HAVCR2; this interaction promotes ILF3 ubiquitination and subsequent degradation. In terms of processing, phosphorylated at Thr-188 and Thr-315 by PKR in response to RNA viruses. This phosphorylation results in the dissociation of ILF2 from the ILF2-ILF3 complex resulting in a cytoplasmic sequestration of ILF3 where it can bind to viral RNAs and impede viral replication. Post-translationally, methylated by protein arginine N-methyltransferase 1.

The protein localises to the nucleus. The protein resides in the nucleolus. Its subcellular location is the cytoplasm. Functionally, RNA-binding protein that plays an essential role in the biogenesis of circular RNAs (circRNAs) which are produced by back-splicing circularization of pre-mRNAs. Within the nucleus, promotes circRNAs processing by stabilizing the regulatory elements residing in the flanking introns of the circularized exons. Plays thereby a role in the back-splicing of a subset of circRNAs. As a consequence, participates in a wide range of transcriptional and post-transcriptional processes. Binds to poly-U elements and AU-rich elements (AREs) in the 3'-UTR of target mRNAs. Upon viral infection, ILF3 accumulates in the cytoplasm and participates in the innate antiviral response. Mechanistically, ILF3 becomes phosphorylated and activated by the double-stranded RNA-activated protein kinase/PKR which releases ILF3 from cellular mature circRNAs. In turn, unbound ILF3 molecules are able to interact with and thus inhibit viral mRNAs. This Rattus norvegicus (Rat) protein is Interleukin enhancer-binding factor 3 (Ilf3).